The following is a 499-amino-acid chain: MAEKLMKYSEAVKEFDPVIGLETHVELSTRTKLFCPAPISFGAEPNTELTPVSLGLPGSLPVLNATAVDYAIKLGLALHCQINEWSQFSRKNYFYPDMPRDYQISQYDKPTNGEGYLDVELEDGSVFRVPIERAHIEDDAGKNTHVGGADGRIEGADHSLVDYNRAGVPLIEIVTKPITGVGDRGPEIAGAYMRAIRDIVRALNISHARMEQGNMRADVNVSLRRSPDDPFGTRSETKNVNSFRGIERTVQYEIRRQAAILNDGGEILQETRHWDEASQATAGGRVKSDADDYRYFPDPDLVMLHITPEHIERLKAEMPEMPRERRNRLKAEWKFSDVEMRDVINADALDLIEETVKLGASPAGAKKWWLGELSREANAKGISLEELPINAQEVADVEKLIAEGKLNDKLAKQTVALVLKGEGTPAEIVEKHGFKVVSDDGMLQTAVDEAMAANPDVVEKLRSGNMKPMGAIIGAVMRATKGQADAKAVTKIVMEKIKG.

This sequence belongs to the GatB/GatE family. GatB subfamily. In terms of assembly, heterotrimer of A, B and C subunits.

The catalysed reaction is L-glutamyl-tRNA(Gln) + L-glutamine + ATP + H2O = L-glutaminyl-tRNA(Gln) + L-glutamate + ADP + phosphate + H(+). It catalyses the reaction L-aspartyl-tRNA(Asn) + L-glutamine + ATP + H2O = L-asparaginyl-tRNA(Asn) + L-glutamate + ADP + phosphate + 2 H(+). Allows the formation of correctly charged Asn-tRNA(Asn) or Gln-tRNA(Gln) through the transamidation of misacylated Asp-tRNA(Asn) or Glu-tRNA(Gln) in organisms which lack either or both of asparaginyl-tRNA or glutaminyl-tRNA synthetases. The reaction takes place in the presence of glutamine and ATP through an activated phospho-Asp-tRNA(Asn) or phospho-Glu-tRNA(Gln). This Bifidobacterium animalis subsp. lactis (strain AD011) protein is Aspartyl/glutamyl-tRNA(Asn/Gln) amidotransferase subunit B.